We begin with the raw amino-acid sequence, 287 residues long: Acetylglutamate kinase (287 aa).

Substrate contacts are provided by residues 64–65, R86, and N185; that span reads GG.

The protein belongs to the acetylglutamate kinase family. ArgB subfamily.

The protein resides in the cytoplasm. The catalysed reaction is N-acetyl-L-glutamate + ATP = N-acetyl-L-glutamyl 5-phosphate + ADP. It participates in amino-acid biosynthesis; L-arginine biosynthesis; N(2)-acetyl-L-ornithine from L-glutamate: step 2/4. Catalyzes the ATP-dependent phosphorylation of N-acetyl-L-glutamate. This is Acetylglutamate kinase from Hydrogenobaculum sp. (strain Y04AAS1).